The sequence spans 170 residues: 3-hydroxyacyl-[acyl-carrier-protein] dehydratase FabZ (170 aa).

Residue His-66 is part of the active site.

This sequence belongs to the thioester dehydratase family. FabZ subfamily.

It is found in the cytoplasm. It carries out the reaction a (3R)-hydroxyacyl-[ACP] = a (2E)-enoyl-[ACP] + H2O. Functionally, involved in unsaturated fatty acids biosynthesis. Catalyzes the dehydration of short chain beta-hydroxyacyl-ACPs and long chain saturated and unsaturated beta-hydroxyacyl-ACPs. The chain is 3-hydroxyacyl-[acyl-carrier-protein] dehydratase FabZ from Granulibacter bethesdensis (strain ATCC BAA-1260 / CGDNIH1).